The chain runs to 217 residues: Uridylate kinase (217 aa).

Position 5–9 (5–9 (KLTGR)) interacts with ATP. A UMP-binding site is contributed by glycine 37. The ATP site is built by glycine 38 and arginine 42. Residues aspartate 59 and 107–113 (FQPGQST) contribute to the UMP site. Residues asparagine 134, tyrosine 139, and aspartate 142 each coordinate ATP.

This sequence belongs to the UMP kinase family. Homohexamer.

It is found in the cytoplasm. The catalysed reaction is UMP + ATP = UDP + ADP. Its pathway is pyrimidine metabolism; CTP biosynthesis via de novo pathway; UDP from UMP (UMPK route): step 1/1. Its activity is regulated as follows. Inhibited by UTP. In terms of biological role, catalyzes the reversible phosphorylation of UMP to UDP. This chain is Uridylate kinase, found in Pyrobaculum calidifontis (strain DSM 21063 / JCM 11548 / VA1).